The following is a 134-amino-acid chain: Profilin-3 (134 aa).

Cys13 and Cys118 are joined by a disulfide. The Involved in PIP2 interaction motif lies at 84-100; it reads AVIRGKKGSGGITIKKT. Thr114 carries the post-translational modification Phosphothreonine.

The protein belongs to the profilin family. As to quaternary structure, occurs in many kinds of cells as a complex with monomeric actin in a 1:1 ratio. Phosphorylated by MAP kinases.

The protein resides in the cytoplasm. It is found in the cytoskeleton. In terms of biological role, binds to actin and affects the structure of the cytoskeleton. At high concentrations, profilin prevents the polymerization of actin, whereas it enhances it at low concentrations. The chain is Profilin-3 from Olea europaea (Common olive).